The primary structure comprises 449 residues: Methylenetetrahydrofolate--tRNA-(uracil-5-)-methyltransferase TrmFO (449 aa).

Gly-9 to Gly-14 contacts FAD.

The protein belongs to the MnmG family. TrmFO subfamily. FAD serves as cofactor.

It is found in the cytoplasm. It carries out the reaction uridine(54) in tRNA + (6R)-5,10-methylene-5,6,7,8-tetrahydrofolate + NADH + H(+) = 5-methyluridine(54) in tRNA + (6S)-5,6,7,8-tetrahydrofolate + NAD(+). The enzyme catalyses uridine(54) in tRNA + (6R)-5,10-methylene-5,6,7,8-tetrahydrofolate + NADPH + H(+) = 5-methyluridine(54) in tRNA + (6S)-5,6,7,8-tetrahydrofolate + NADP(+). Its function is as follows. Catalyzes the folate-dependent formation of 5-methyl-uridine at position 54 (M-5-U54) in all tRNAs. The chain is Methylenetetrahydrofolate--tRNA-(uracil-5-)-methyltransferase TrmFO from Gloeobacter violaceus (strain ATCC 29082 / PCC 7421).